A 360-amino-acid polypeptide reads, in one-letter code: Glutamate 5-kinase (360 aa).

ATP is bound at residue lysine 7. Positions 47, 134, and 146 each coordinate substrate. ATP contacts are provided by residues 166-167 (TD) and 210-216 (TGGITTK). Residues 275–348 (VGQITLDEGA…LNKKENINSS (74 aa)) form the PUA domain.

Belongs to the glutamate 5-kinase family.

The protein localises to the cytoplasm. It carries out the reaction L-glutamate + ATP = L-glutamyl 5-phosphate + ADP. The protein operates within amino-acid biosynthesis; L-proline biosynthesis; L-glutamate 5-semialdehyde from L-glutamate: step 1/2. Functionally, catalyzes the transfer of a phosphate group to glutamate to form L-glutamate 5-phosphate. The chain is Glutamate 5-kinase from Prochlorococcus marinus subsp. pastoris (strain CCMP1986 / NIES-2087 / MED4).